The following is a 501-amino-acid chain: Aspartyl/glutamyl-tRNA(Asn/Gln) amidotransferase subunit B (501 aa).

Residues valine 271–phenylalanine 299 are disordered. The span at arginine 288–phenylalanine 299 shows a compositional bias: basic and acidic residues.

Belongs to the GatB/GatE family. GatB subfamily. In terms of assembly, heterotrimer of A, B and C subunits.

It carries out the reaction L-glutamyl-tRNA(Gln) + L-glutamine + ATP + H2O = L-glutaminyl-tRNA(Gln) + L-glutamate + ADP + phosphate + H(+). The enzyme catalyses L-aspartyl-tRNA(Asn) + L-glutamine + ATP + H2O = L-asparaginyl-tRNA(Asn) + L-glutamate + ADP + phosphate + 2 H(+). In terms of biological role, allows the formation of correctly charged Asn-tRNA(Asn) or Gln-tRNA(Gln) through the transamidation of misacylated Asp-tRNA(Asn) or Glu-tRNA(Gln) in organisms which lack either or both of asparaginyl-tRNA or glutaminyl-tRNA synthetases. The reaction takes place in the presence of glutamine and ATP through an activated phospho-Asp-tRNA(Asn) or phospho-Glu-tRNA(Gln). The protein is Aspartyl/glutamyl-tRNA(Asn/Gln) amidotransferase subunit B of Corynebacterium diphtheriae (strain ATCC 700971 / NCTC 13129 / Biotype gravis).